A 129-amino-acid chain; its full sequence is Histone H2B.1 (129 aa).

Residues 1–19 are compositionally biased toward basic and acidic residues; that stretch reads MAPKAEKKPASKAPAEKKP. Positions 1 to 37 are disordered; the sequence is MAPKAEKKPASKAPAEKKPAAKKTASTDSKKRTKTRK. Lys-7 and Lys-8 each carry N6-acetyllysine; alternate. Glycyl lysine isopeptide (Lys-Gly) (interchain with G-Cter in SUMO); alternate cross-links involve residues Lys-7 and Lys-8. Ser-11 carries the post-translational modification Phosphoserine. N6-acetyllysine is present on Lys-12. Lys-17 bears the N6-acetyllysine; alternate mark. Lys-17 participates in a covalent cross-link: Glycyl lysine isopeptide (Lys-Gly) (interchain with G-Cter in SUMO); alternate. Residue Lys-18 forms a Glycyl lysine isopeptide (Lys-Gly) (interchain with G-Cter in SUMO) linkage. A Glycyl lysine isopeptide (Lys-Gly) (interchain with G-Cter in ubiquitin) cross-link involves residue Lys-123.

This sequence belongs to the histone H2B family. The nucleosome is a histone octamer containing two molecules each of H2A, H2B, H3 and H4 assembled in one H3-H4 heterotetramer and two H2A-H2B heterodimers. The octamer wraps approximately 147 bp of DNA. Post-translationally, monoubiquitinated by the UBC2-BRE1 complex to form H2BK123ub1. H2BK123ub1 gives a specific tag for epigenetic transcriptional activation and is also prerequisite for H3K4me and H3K79me formation. H2BK123ub1 also modulates the formation of double-strand breaks during meiosis and is a prerequisite for DNA-damage checkpoint activation. Phosphorylated by STE20 to form H2BS10ph during progression through meiotic prophase. May be correlated with chromosome condensation. In terms of processing, acetylated by GCN5 to form H2BK11ac and H2BK16ac. H2BK16ac can also be formed by ESA1. Acetylation of N-terminal lysines and particularly formation of H2BK11acK16ac has a positive effect on transcription. Post-translationally, sumoylation to form H2BK6su or H2BK7su, and probably also H2BK16su or H2BK17su, occurs preferentially near the telomeres and represses gene transcription.

It localises to the nucleus. It is found in the chromosome. In terms of biological role, core component of nucleosome. Nucleosomes wrap and compact DNA into chromatin, limiting DNA accessibility to the cellular machineries which require DNA as a template. Histones thereby play a central role in transcription regulation, DNA repair, DNA replication and chromosomal stability. DNA accessibility is regulated via a complex set of post-translational modifications of histones, also called histone code, and nucleosome remodeling. This chain is Histone H2B.1 (HTB1), found in Meyerozyma guilliermondii (strain ATCC 6260 / CBS 566 / DSM 6381 / JCM 1539 / NBRC 10279 / NRRL Y-324) (Yeast).